A 215-amino-acid polypeptide reads, in one-letter code: MAKPLNERFFIPHEIKVMGRWSTEDVEVRDPSLKPYINLEPRLLPHTHGRHAKKHFGKANVHIVERLINKIMRSGGSHYKVAGHFMRREHRSLNSKKVKAYEVVKEAFKIIEQRTGKNPIQVLVWAIENAAPREDTTSVMFGGIRYHVAVDISPMRRLDVALRNIALGASAKCYRNKMSFAEALAEEIILAANKDPKSYAYSKKLEIERIAESSR.

It belongs to the universal ribosomal protein uS7 family. As to quaternary structure, part of the 30S ribosomal subunit.

Functionally, one of the primary rRNA binding proteins, it binds directly to 16S rRNA where it nucleates assembly of the head domain of the 30S subunit. Is located at the subunit interface close to the decoding center. This chain is Small ribosomal subunit protein uS7, found in Pyrococcus furiosus (strain ATCC 43587 / DSM 3638 / JCM 8422 / Vc1).